We begin with the raw amino-acid sequence, 278 residues long: Poly(3-hydroxyoctanoate) depolymerase (278 aa).

A signal peptide spans 1 to 33 (MPLRTLLCGLLLAVCLGQHALAASRCSERPRTL).

Its subcellular location is the secreted. The enzyme catalyses Hydrolyzes the polyester poly{oxycarbonyl[(R)-2-pentylethylene]} to oligomers.. Its function is as follows. Hydrolysis of poly(3-hydroxyoctanoic acid). This chain is Poly(3-hydroxyoctanoate) depolymerase (phaZ), found in Pseudomonas fluorescens.